The following is a 450-amino-acid chain: MFS-type transporter avaK (450 aa).

The next 8 helical transmembrane spans lie at 18-38 (VMAL…LSMP), 100-120 (RVVC…SGLL), 148-168 (AVAL…AAPA), 171-191 (ALVA…MLFV), 244-264 (APII…HFLL), 280-300 (LVLV…MPAA), 329-349 (FGFF…ALAF), and 408-428 (GWLG…LVAV).

The protein belongs to the major facilitator superfamily.

It is found in the membrane. The protein operates within secondary metabolite biosynthesis. MFS-type transporter; part of the cluster that mediates the biosynthesis of a highly modified cyclo-arginine-tryptophan dipeptide (cRW). This chain is MFS-type transporter avaK, found in Aspergillus versicolor.